A 147-amino-acid chain; its full sequence is Deoxyuridine 5'-triphosphate nucleotidohydrolase (147 aa).

Residues 67-69 (RSG), asparagine 80, and 84-86 (LID) each bind substrate.

The protein belongs to the dUTPase family. Mg(2+) serves as cofactor.

The catalysed reaction is dUTP + H2O = dUMP + diphosphate + H(+). It functions in the pathway pyrimidine metabolism; dUMP biosynthesis; dUMP from dCTP (dUTP route): step 2/2. In terms of biological role, this enzyme is involved in nucleotide metabolism: it produces dUMP, the immediate precursor of thymidine nucleotides and it decreases the intracellular concentration of dUTP so that uracil cannot be incorporated into DNA. The sequence is that of Deoxyuridine 5'-triphosphate nucleotidohydrolase from Dictyoglomus turgidum (strain DSM 6724 / Z-1310).